The following is a 381-amino-acid chain: Probable 26S proteasome regulatory subunit rpn9 (381 aa).

The PCI domain maps to 177-343; that stretch reads QYYRHCLLYL…QIVTISSVQS (167 aa).

It belongs to the proteasome subunit S11 family.

Acts as a regulatory subunit of the 26S proteasome which is involved in the ATP-dependent degradation of ubiquitinated proteins. The sequence is that of Probable 26S proteasome regulatory subunit rpn9 (rpn9) from Schizosaccharomyces pombe (strain 972 / ATCC 24843) (Fission yeast).